Here is a 444-residue protein sequence, read N- to C-terminus: Acyl-CoA 6-desaturase (444 aa).

The Cytoplasmic segment spans residues 1–130 (MGGGGQQTDR…EAEGCFKTQP (130 aa)). The Cytochrome b5 heme-binding domain maps to 18 to 95 (FSSYTWEEVQ…LKPLLIGELE (78 aa)). Residues 131 to 151 (LFFALHLGHILLLEAIAFMMV) traverse the membrane as a helical segment. The Lumenal segment spans residues 152–157 (WYFGTG). The helical transmembrane segment at 158 to 178 (WINTLIVAVILATAQSQAGWL) threads the bilayer. The Cytoplasmic portion of the chain corresponds to 179–264 (QHDFGHLSVF…KHLPYNHQHK (86 aa)). Residues 180–184 (HDFGH) carry the Histidine box-1 motif. Positions 217–221 (HFQHH) match the Histidine box-2 motif. The helical transmembrane segment at 265–285 (YFFFIGPPLLIPVYFQFQIFH) threads the bilayer. The Lumenal portion of the chain corresponds to 286 to 305 (NMISHGMWVDLLWCISYYVR). The chain crosses the membrane as a helical span at residues 306–326 (YFLCYTQFYGVFWAIILFNFV). Topologically, residues 327 to 444 (RFMESHWFVW…ELWLDAYLNK (118 aa)) are cytoplasmic. A Histidine box-3 motif is present at residues 382–386 (QIEHH).

Belongs to the fatty acid desaturase type 1 family.

The protein localises to the endoplasmic reticulum membrane. It carries out the reaction (9Z,12Z)-octadecadienoyl-CoA + 2 Fe(II)-[cytochrome b5] + O2 + 2 H(+) = (6Z,9Z,12Z)-octadecatrienoyl-CoA + 2 Fe(III)-[cytochrome b5] + 2 H2O. The enzyme catalyses (9Z,12Z,15Z)-octadecatrienoyl-CoA + 2 Fe(II)-[cytochrome b5] + O2 + 2 H(+) = (6Z,9Z,12Z,15Z)-octadecatetraenoyl-CoA + 2 Fe(III)-[cytochrome b5] + 2 H2O. It catalyses the reaction (8Z,11Z,14Z,17Z)-eicosatetraenoyl-CoA + 2 Fe(II)-[cytochrome b5] + O2 + 2 H(+) = (5Z,8Z,11Z,14Z,17Z)-eicosapentaenoyl-CoA + 2 Fe(III)-[cytochrome b5] + 2 H2O. The catalysed reaction is (8Z,11Z,14Z)-eicosatrienoyl-CoA + 2 Fe(II)-[cytochrome b5] + O2 + 2 H(+) = (5Z,8Z,11Z,14Z)-eicosatetraenoyl-CoA + 2 Fe(III)-[cytochrome b5] + 2 H2O. It participates in lipid metabolism; polyunsaturated fatty acid biosynthesis. In terms of biological role, fatty acid desaturase with bifunctional delta-5 and delta-6 activities. Component of a lipid metabolic pathway that catalyzes the biosynthesis of polyunsaturated fatty acids (PUFA) with preference toward n-3 substrates and Delta-6 function. This chain is Acyl-CoA 6-desaturase (fads2), found in Danio rerio (Zebrafish).